A 120-amino-acid polypeptide reads, in one-letter code: U13-lycotoxin-Ls1c (120 aa).

The first 16 residues, 1-16 (MKILFVLISILYAVYC), serve as a signal peptide directing secretion. Residues 17-54 (FSSEEDVDSAYLANELEPVEDINSEQYAALEPKEEQER) constitute a propeptide that is removed on maturation. Intrachain disulfides connect Cys-56–Cys-70, Cys-69–Cys-87, and Cys-78–Cys-85. One can recognise an Agouti domain in the interval 56 to 95 (CADMGQDRKDDCDCCLNIATCNCWFGRYFCSCTFGDYQTC).

The protein belongs to the neurotoxin 05 (agouti) family. Contains 5 disulfide bonds. As to expression, expressed by the venom gland.

Its subcellular location is the secreted. The sequence is that of U13-lycotoxin-Ls1c from Lycosa singoriensis (Wolf spider).